Consider the following 462-residue polypeptide: tRNA(Ile)-lysidine synthase (462 aa).

An ATP-binding site is contributed by 26–31; sequence SGGVDS.

It belongs to the tRNA(Ile)-lysidine synthase family.

It localises to the cytoplasm. It carries out the reaction cytidine(34) in tRNA(Ile2) + L-lysine + ATP = lysidine(34) in tRNA(Ile2) + AMP + diphosphate + H(+). Ligates lysine onto the cytidine present at position 34 of the AUA codon-specific tRNA(Ile) that contains the anticodon CAU, in an ATP-dependent manner. Cytidine is converted to lysidine, thus changing the amino acid specificity of the tRNA from methionine to isoleucine. This Enterococcus faecalis (strain ATCC 700802 / V583) protein is tRNA(Ile)-lysidine synthase.